The chain runs to 246 residues: uncharacterized protein (246 aa).

This is an uncharacterized protein from Acanthamoeba polyphaga (Amoeba).